Reading from the N-terminus, the 293-residue chain is Exosome complex component RRP4 (293 aa).

One can recognise an S1 motif domain in the interval 79–159; it reads EVGDIVVGRI…SDGAVSLHTR (81 aa). The residue at position 124 (Ser-124) is a Phosphoserine.

It belongs to the RRP4 family. Component of the RNA exosome core complex (Exo-9), composed of EXOSC1, EXOSC2, EXOSC3, EXOSC4, EXOSC5, EXOSC6, EXOSC7, EXOSC8 and EXOSC9; within the complex interacts with EXOSC4 and EXOSC7. The catalytically inactive RNA exosome core complex (Exo-9) associates with the catalytic subunit EXOSC10/RRP6. Exo-9 may associate with DIS3 to form the nucleolar exosome complex, or DIS3L to form the cytoplasmic exosome complex. Exo-9 is formed by a hexameric base ring consisting of the heterodimers EXOSC4-EXOSC9, EXOSC5-EXOSC8 and EXOSC6-EXOSC7, and a cap ring consisting of EXOSC1, EXOSC2 and EXOSC3. The RNA exosome complex associates with cofactors C1D/RRP47, MPHOSPH6/MPP6 and MTREX/MTR4. Interacts with GTPBP1. Interacts with ZFP36L1 (via N-terminus).

The protein resides in the cytoplasm. The protein localises to the nucleus. It is found in the nucleolus. Functionally, non-catalytic component of the RNA exosome complex which has 3'-&gt;5' exoribonuclease activity and participates in a multitude of cellular RNA processing and degradation events. In the nucleus, the RNA exosome complex is involved in proper maturation of stable RNA species such as rRNA, snRNA and snoRNA, in the elimination of RNA processing by-products and non-coding 'pervasive' transcripts, such as antisense RNA species and promoter-upstream transcripts (PROMPTs), and of mRNAs with processing defects, thereby limiting or excluding their export to the cytoplasm. The RNA exosome may be involved in Ig class switch recombination (CSR) and/or Ig variable region somatic hypermutation (SHM) by targeting AICDA deamination activity to transcribed dsDNA substrates. In the cytoplasm, the RNA exosome complex is involved in general mRNA turnover and specifically degrades inherently unstable mRNAs containing AU-rich elements (AREs) within their 3' untranslated regions, and in RNA surveillance pathways, preventing translation of aberrant mRNAs. It seems to be involved in degradation of histone mRNA. The catalytic inactive RNA exosome core complex of 9 subunits (Exo-9) is proposed to play a pivotal role in the binding and presentation of RNA for ribonucleolysis, and to serve as a scaffold for the association with catalytic subunits and accessory proteins or complexes. EXOSC2 as peripheral part of the Exo-9 complex stabilizes the hexameric ring of RNase PH-domain subunits through contacts with EXOSC4 and EXOSC7. This is Exosome complex component RRP4 from Homo sapiens (Human).